Here is a 398-residue protein sequence, read N- to C-terminus: Acetate kinase (398 aa).

Asn9 lines the Mg(2+) pocket. Lys16 is a binding site for ATP. Arg93 serves as a coordination point for substrate. Asp150 acts as the Proton donor/acceptor in catalysis. Residues His209 to Gly213, Asp284 to Arg286, and Gly329 to His333 each bind ATP. Glu382 is a Mg(2+) binding site.

This sequence belongs to the acetokinase family. Homodimer. Requires Mg(2+) as cofactor. Mn(2+) serves as cofactor.

It localises to the cytoplasm. It catalyses the reaction acetate + ATP = acetyl phosphate + ADP. It participates in metabolic intermediate biosynthesis; acetyl-CoA biosynthesis; acetyl-CoA from acetate: step 1/2. In terms of biological role, catalyzes the formation of acetyl phosphate from acetate and ATP. Can also catalyze the reverse reaction. This chain is Acetate kinase, found in Rhodopseudomonas palustris (strain ATCC BAA-98 / CGA009).